We begin with the raw amino-acid sequence, 292 residues long: NAD kinase (292 aa).

Residue Asp-73 is the Proton acceptor of the active site. NAD(+)-binding positions include 73 to 74, 147 to 148, His-158, Arg-175, Asp-177, 188 to 193, and Gln-247; these read DG, NE, and TAYSLS.

This sequence belongs to the NAD kinase family. Requires a divalent metal cation as cofactor.

It is found in the cytoplasm. It catalyses the reaction NAD(+) + ATP = ADP + NADP(+) + H(+). Involved in the regulation of the intracellular balance of NAD and NADP, and is a key enzyme in the biosynthesis of NADP. Catalyzes specifically the phosphorylation on 2'-hydroxyl of the adenosine moiety of NAD to yield NADP. The sequence is that of NAD kinase from Salmonella dublin (strain CT_02021853).